Reading from the N-terminus, the 379-residue chain is UDP-4-amino-4-deoxy-L-arabinose--oxoglutarate aminotransferase (379 aa).

The residue at position 182 (K182) is an N6-(pyridoxal phosphate)lysine.

The protein belongs to the DegT/DnrJ/EryC1 family. ArnB subfamily. Homodimer. Pyridoxal 5'-phosphate serves as cofactor.

The catalysed reaction is UDP-4-amino-4-deoxy-beta-L-arabinose + 2-oxoglutarate = UDP-beta-L-threo-pentopyranos-4-ulose + L-glutamate. It functions in the pathway nucleotide-sugar biosynthesis; UDP-4-deoxy-4-formamido-beta-L-arabinose biosynthesis; UDP-4-deoxy-4-formamido-beta-L-arabinose from UDP-alpha-D-glucuronate: step 2/3. It participates in bacterial outer membrane biogenesis; lipopolysaccharide biosynthesis. Functionally, catalyzes the conversion of UDP-4-keto-arabinose (UDP-Ara4O) to UDP-4-amino-4-deoxy-L-arabinose (UDP-L-Ara4N). The modified arabinose is attached to lipid A and is required for resistance to polymyxin and cationic antimicrobial peptides. In Escherichia coli O7:K1 (strain IAI39 / ExPEC), this protein is UDP-4-amino-4-deoxy-L-arabinose--oxoglutarate aminotransferase.